Here is a 266-residue protein sequence, read N- to C-terminus: Diphthine synthase (266 aa).

S-adenosyl-L-methionine-binding positions include Leu9, Asp84, Val87, 112–113, Leu169, Ala210, and His235; that span reads SI.

It belongs to the diphthine synthase family. As to quaternary structure, homodimer.

It carries out the reaction 2-[(3S)-amino-3-carboxypropyl]-L-histidyl-[translation elongation factor 2] + 3 S-adenosyl-L-methionine = diphthine-[translation elongation factor 2] + 3 S-adenosyl-L-homocysteine + 3 H(+). It functions in the pathway protein modification; peptidyl-diphthamide biosynthesis. Functionally, S-adenosyl-L-methionine-dependent methyltransferase that catalyzes the trimethylation of the amino group of the modified target histidine residue in translation elongation factor 2 (EF-2), to form an intermediate called diphthine. The three successive methylation reactions represent the second step of diphthamide biosynthesis. The chain is Diphthine synthase from Methanosarcina mazei (strain ATCC BAA-159 / DSM 3647 / Goe1 / Go1 / JCM 11833 / OCM 88) (Methanosarcina frisia).